We begin with the raw amino-acid sequence, 547 residues long: Chaperonin GroEL (547 aa).

ATP contacts are provided by residues 30-33 (TLGP), K51, 87-91 (DGTTT), G415, and D496.

The protein belongs to the chaperonin (HSP60) family. As to quaternary structure, forms a cylinder of 14 subunits composed of two heptameric rings stacked back-to-back. Interacts with the co-chaperonin GroES.

It is found in the cytoplasm. The enzyme catalyses ATP + H2O + a folded polypeptide = ADP + phosphate + an unfolded polypeptide.. Functionally, together with its co-chaperonin GroES, plays an essential role in assisting protein folding. The GroEL-GroES system forms a nano-cage that allows encapsulation of the non-native substrate proteins and provides a physical environment optimized to promote and accelerate protein folding. The chain is Chaperonin GroEL from Actinobacillus pleuropneumoniae (Haemophilus pleuropneumoniae).